We begin with the raw amino-acid sequence, 81 residues long: Apolipoprotein C-I, acidic form (81 aa).

The first 24 residues, 1 to 24 (MRLFLSLLVVVLSIVLEGPTPAQG), serve as a signal peptide directing secretion.

Belongs to the apolipoprotein C1 family.

Its subcellular location is the secreted. The protein is Apolipoprotein C-I, acidic form (APOC1A) of Theropithecus gelada (Gelada baboon).